The sequence spans 269 residues: Extracellular metalloprotease UREG_07765 (269 aa).

A signal peptide spans 1–18; that stretch reads MRLSVSLLALAFGSLVAA. N-linked (GlcNAc...) asparagine glycosylation is present at N179. Zn(2+) is bound at residue H191. The active site involves E192. H195 provides a ligand contact to Zn(2+). The tract at residues 207–227 is disordered; that stretch reads VSDTPPQRSSTQGCPSSRDSC. Over residues 210–225 the composition is skewed to polar residues; it reads TPPQRSSTQGCPSSRD. Residues C220 and C246 are joined by a disulfide bond.

It belongs to the peptidase M43B family.

Its subcellular location is the secreted. In terms of biological role, secreted metalloproteinase that allows assimilation of proteinaceous substrates. The protein is Extracellular metalloprotease UREG_07765 of Uncinocarpus reesii (strain UAMH 1704).